Consider the following 195-residue polypeptide: MNKMAGVVLAGGQSRRFGSPKAFAKFNGKYFFEIAVETLRTVVEDIYIVSHPSLIDCFRQKTAEKVIMDDERYRGQGPLAGIYTVMKECEAEWIFVLPCDMPYMRPEAAAKLAKYANEKFDAIICAHFGRIQPLVGIYHRRTCKQIEKLLQAQDNRMKSLFRHCHVHYVNEQDFWEDEIVFRNVNTPNEFDDIVT.

GTP-binding positions include 9–11, Lys-21, Asp-69, and Asp-100; that span reads LAG. Residue Asp-100 coordinates Mg(2+).

This sequence belongs to the MobA family. The cofactor is Mg(2+).

The protein resides in the cytoplasm. It catalyses the reaction Mo-molybdopterin + GTP + H(+) = Mo-molybdopterin guanine dinucleotide + diphosphate. Transfers a GMP moiety from GTP to Mo-molybdopterin (Mo-MPT) cofactor (Moco or molybdenum cofactor) to form Mo-molybdopterin guanine dinucleotide (Mo-MGD) cofactor. The sequence is that of Probable molybdenum cofactor guanylyltransferase from Geobacillus sp. (strain WCH70).